We begin with the raw amino-acid sequence, 79 residues long: Acyl carrier protein (79 aa).

One can recognise a Carrier domain in the interval 2–77 (SSIEDRVKKI…QAVDYIKKHL (76 aa)). Serine 37 bears the O-(pantetheine 4'-phosphoryl)serine mark.

This sequence belongs to the acyl carrier protein (ACP) family. Post-translationally, 4'-phosphopantetheine is transferred from CoA to a specific serine of apo-ACP by AcpS. This modification is essential for activity because fatty acids are bound in thioester linkage to the sulfhydryl of the prosthetic group.

The protein resides in the cytoplasm. It participates in lipid metabolism; fatty acid biosynthesis. Carrier of the growing fatty acid chain in fatty acid biosynthesis. The polypeptide is Acyl carrier protein (Halorhodospira halophila (strain DSM 244 / SL1) (Ectothiorhodospira halophila (strain DSM 244 / SL1))).